The primary structure comprises 236 residues: ATP synthase subunit a, chloroplastic (236 aa).

The next 5 membrane-spanning stretches (helical) occupy residues 25–45 (MHGQ…AFAV), 87–107 (FIGT…LIPW), 123–143 (DINT…YAGL), 180–202 (LFGN…PLVI), and 210–230 (GLFT…AYIG).

It belongs to the ATPase A chain family. In terms of assembly, F-type ATPases have 2 components, CF(1) - the catalytic core - and CF(0) - the membrane proton channel. CF(1) has five subunits: alpha(3), beta(3), gamma(1), delta(1), epsilon(1). CF(0) has four main subunits: a, b, b' and c.

The protein resides in the plastid. Its subcellular location is the chloroplast thylakoid membrane. Its function is as follows. Key component of the proton channel; it plays a direct role in the translocation of protons across the membrane. The chain is ATP synthase subunit a, chloroplastic from Ostreococcus tauri.